Consider the following 179-residue polypeptide: Cell division protein SepF (179 aa).

The tract at residues 22–53 (LPYEKRDEPVFTPVNSSQEPALPMNQPSQSVG) is disordered. Positions 34-53 (PVNSSQEPALPMNQPSQSVG) are enriched in polar residues.

This sequence belongs to the SepF family. Homodimer. Interacts with FtsZ.

Its subcellular location is the cytoplasm. In terms of biological role, cell division protein that is part of the divisome complex and is recruited early to the Z-ring. Probably stimulates Z-ring formation, perhaps through the cross-linking of FtsZ protofilaments. Its function overlaps with FtsA. The sequence is that of Cell division protein SepF from Streptococcus pneumoniae (strain P1031).